The chain runs to 446 residues: MSEMTPREIVHELNRHIIGQDNAKRSVAIALRNRWRRMQLEESLRVEVSPKNILMIGPTGVGKTEIARRLAKLANAPFIKVEATKFTEVGYVGKEVETIIRDLTDVAIKMTHQQAMEKVQYRAEEQAEERILDALLPPARDAWGQNEQSTEDTTSSNTRQIFRKKLREGKLDDKEIEVDVAAPQMGVEIMSPPGMEEMTNQLQGMFQNLAGDTKKKRKMKIKDAFKALTEEEAAKLVNQEELKESAIFNAENNGIVFIDEIDKICKRGDSSGPDVSREGVQRDLLPLIEGSTVSTKHGMVKTDHILFITSGAFQVAKPSDLIPELQGRLPIRVELEALSAHDFKRILTEPKASLTEQYIALMKTEDVGIEFTEDGINQIADAAWRVNETTENIGARRLHTVMERLMDEISFDATDRAGSKLVIDEAYVISKLGELVEDEDLSRFIL.

Residues I18, 60 to 65 (GVGKTE), D259, E324, and R396 contribute to the ATP site.

The protein belongs to the ClpX chaperone family. HslU subfamily. As to quaternary structure, a double ring-shaped homohexamer of HslV is capped on each side by a ring-shaped HslU homohexamer. The assembly of the HslU/HslV complex is dependent on binding of ATP.

The protein resides in the cytoplasm. ATPase subunit of a proteasome-like degradation complex; this subunit has chaperone activity. The binding of ATP and its subsequent hydrolysis by HslU are essential for unfolding of protein substrates subsequently hydrolyzed by HslV. HslU recognizes the N-terminal part of its protein substrates and unfolds these before they are guided to HslV for hydrolysis. This chain is ATP-dependent protease ATPase subunit HslU, found in Vibrio atlanticus (strain LGP32) (Vibrio splendidus (strain Mel32)).